The sequence spans 1115 residues: Carbamoyl phosphate synthase large chain (1115 aa).

Residues 1–407 (MPRRTDLHHV…ALGKVMRSLE (407 aa)) are carboxyphosphate synthetic domain. 12 residues coordinate ATP: R134, R174, G180, G181, E213, I215, E220, G246, V247, H248, Q290, and E304. The 196-residue stretch at 138–333 (KDIVAKAGGE…IAKIAAKLAI (196 aa)) folds into the ATP-grasp 1 domain. Mg(2+)-binding residues include Q290, E304, and N306. Residues Q290, E304, and N306 each contribute to the Mn(2+) site. The tract at residues 408–559 (TTRAGFWTAP…ELDPAAETEV (152 aa)) is oligomerization domain. The segment at 560 to 965 (APQTERPKVL…AFAKSQTAAY (406 aa)) is carbamoyl phosphate synthetic domain. One can recognise an ATP-grasp 2 domain in the interval 693 to 884 (GDLLSAAGLP…LAKACARIML (192 aa)). Residues R729, R768, L770, E775, G800, I801, H802, S803, Q843, and E855 each contribute to the ATP site. Mg(2+) contacts are provided by Q843, E855, and N857. Residues Q843, E855, and N857 each contribute to the Mn(2+) site. The MGS-like domain occupies 966–1113 (GSLPAQGTVF…QELHRVIGGV (148 aa)). The allosteric domain stretch occupies residues 966-1115 (GSLPAQGTVF…LHRVIGGVER (150 aa)).

It belongs to the CarB family. Composed of two chains; the small (or glutamine) chain promotes the hydrolysis of glutamine to ammonia, which is used by the large (or ammonia) chain to synthesize carbamoyl phosphate. Tetramer of heterodimers (alpha,beta)4. The cofactor is Mg(2+). It depends on Mn(2+) as a cofactor.

The catalysed reaction is hydrogencarbonate + L-glutamine + 2 ATP + H2O = carbamoyl phosphate + L-glutamate + 2 ADP + phosphate + 2 H(+). The enzyme catalyses hydrogencarbonate + NH4(+) + 2 ATP = carbamoyl phosphate + 2 ADP + phosphate + 2 H(+). It functions in the pathway amino-acid biosynthesis; L-arginine biosynthesis; carbamoyl phosphate from bicarbonate: step 1/1. It participates in pyrimidine metabolism; UMP biosynthesis via de novo pathway; (S)-dihydroorotate from bicarbonate: step 1/3. In terms of biological role, large subunit of the glutamine-dependent carbamoyl phosphate synthetase (CPSase). CPSase catalyzes the formation of carbamoyl phosphate from the ammonia moiety of glutamine, carbonate, and phosphate donated by ATP, constituting the first step of 2 biosynthetic pathways, one leading to arginine and/or urea and the other to pyrimidine nucleotides. The large subunit (synthetase) binds the substrates ammonia (free or transferred from glutamine from the small subunit), hydrogencarbonate and ATP and carries out an ATP-coupled ligase reaction, activating hydrogencarbonate by forming carboxy phosphate which reacts with ammonia to form carbamoyl phosphate. The polypeptide is Carbamoyl phosphate synthase large chain (Mycobacterium tuberculosis (strain CDC 1551 / Oshkosh)).